Here is a 593-residue protein sequence, read N- to C-terminus: Metal-response element-binding transcription factor 2 (593 aa).

Positions 1 to 35 are disordered; the sequence is MRDSTGAGNSLVHKRSPLRRNQKTPTSLTKLSLQD. Positions 12–22 are enriched in basic residues; sequence VHKRSPLRRNQ. Over residues 23 to 32 the composition is skewed to polar residues; sequence KTPTSLTKLS. Position 24 is a phosphothreonine (Thr24). A Tudor domain is found at 44–101; that stretch reads CKFEEGQDVLARWSDGLFYLGTIKKINILKQSCFIIFEDSSKSWVLWKDIQTGATGSG. 2 consecutive PHD-type zinc fingers follow at residues 102–157 and 201–255; these read EMVC…CVFA and QCYC…CSSG. A Glycyl lysine isopeptide (Lys-Gly) (interchain with G-Cter in SUMO2) cross-link involves residue Lys360. Over residues 360–374 the composition is skewed to basic and acidic residues; it reads KAEKEPEGTSHEFKI. Disordered stretches follow at residues 360-411 and 424-486; these read KAEK…PYTR and KESI…TRTG. Residues 445–454 show a composition bias toward polar residues; the sequence is TAHSSNTSDV. Position 452 is a phosphoserine (Ser452). Residues 459–471 are compositionally biased toward low complexity; that stretch reads ASSAKETTSSSIS. Residue Lys522 forms a Glycyl lysine isopeptide (Lys-Gly) (interchain with G-Cter in SUMO2) linkage.

It belongs to the Polycomblike family. Associates with the PRC2 complex, which consists of the core components EED, EZH1 or EZH2, SUZ12, and RBBP4, and various combinations of accessory subunits including AEBP2, JARID2, PHF19, MTF2 and EPOP. Forms a dimeric PRC2.1 (class 1, PRC-PCL) complex consisting of at least SUZ12, RBBP4, and PHF19 or MTF2; PHF19 and MTF2 stabilize the dimeric structure which enhances PRC2 interaction with chromatin.

It is found in the nucleus. Functionally, polycomb group (PcG) protein that specifically binds histone H3 trimethylated at 'Lys-36' (H3K36me3) and recruits the PRC2 complex, thus enhancing PRC2 H3K27me3 methylation activity. Regulates the transcriptional networks during embryonic stem cell self-renewal and differentiation. Promotes recruitment of the PRC2 complex to the inactive X chromosome in differentiating XX ES cells and PRC2 recruitment to target genes in undifferentiated ES cells. Required to repress Hox genes by enhancing H3K27me3 methylation of the PRC2 complex. In some conditions may act as an inhibitor of PRC2 activity: able to activate the CDKN2A gene and promote cellular senescence by suppressing the catalytic activity of the PRC2 complex locally. Binds to the metal-regulating-element (MRE) of MT1A gene promoter. The protein is Metal-response element-binding transcription factor 2 (MTF2) of Homo sapiens (Human).